The chain runs to 157 residues: SUMO-conjugating enzyme UBC9 (157 aa).

The residue at position 2 (Ser-2) is an N-acetylserine. Residues 4–157 (LCLQRLQEER…VLLQAKQYSK (154 aa)) form the UBC core domain. The active-site Glycyl thioester intermediate is the Cys-93.

It belongs to the ubiquitin-conjugating enzyme family. As to quaternary structure, interacts with SIZ1.

It is found in the nucleus. It participates in protein modification; protein sumoylation. E2 ubiquitin-like--protein ligase mediating SUMO/Smt3 attachment to septins and PCNA. Seems to be involved in degradation of S- (CLB5) and M-phase cyclins (CLB2). This chain is SUMO-conjugating enzyme UBC9 (UBC9), found in Saccharomyces cerevisiae (strain ATCC 204508 / S288c) (Baker's yeast).